A 642-amino-acid polypeptide reads, in one-letter code: Threonine--tRNA ligase (642 aa).

Residues 1–61 form the TGS domain; the sequence is MPVITLPDGS…VDDASVAIIT (61 aa). The catalytic stretch occupies residues 243 to 534; that stretch reads DHRKIGKQLD…LTEEYAGFFP (292 aa). 3 residues coordinate Zn(2+): C334, H385, and H511.

Belongs to the class-II aminoacyl-tRNA synthetase family. In terms of assembly, homodimer. Zn(2+) serves as cofactor.

The protein resides in the cytoplasm. It carries out the reaction tRNA(Thr) + L-threonine + ATP = L-threonyl-tRNA(Thr) + AMP + diphosphate + H(+). Its function is as follows. Catalyzes the attachment of threonine to tRNA(Thr) in a two-step reaction: L-threonine is first activated by ATP to form Thr-AMP and then transferred to the acceptor end of tRNA(Thr). Also edits incorrectly charged L-seryl-tRNA(Thr). This Erwinia tasmaniensis (strain DSM 17950 / CFBP 7177 / CIP 109463 / NCPPB 4357 / Et1/99) protein is Threonine--tRNA ligase.